Reading from the N-terminus, the 157-residue chain is Large ribosomal subunit protein bL17 (157 aa).

Residues 124-157 (AAPVVSKQDRAKRVKGSKKAESRSQENEGGDAAE) form a disordered region.

Belongs to the bacterial ribosomal protein bL17 family. As to quaternary structure, part of the 50S ribosomal subunit. Contacts protein L32.

In Chlorobaculum tepidum (strain ATCC 49652 / DSM 12025 / NBRC 103806 / TLS) (Chlorobium tepidum), this protein is Large ribosomal subunit protein bL17.